The sequence spans 426 residues: Mitochondrial distribution and morphology protein 12 (426 aa).

Residues 1–426 (MSIEVDWKTA…VFPSFWTFLI (426 aa)) form the SMP-LTD domain. 3 disordered regions span residues 88 to 147 (AHGN…GTPG), 185 to 264 (WTDH…FRFP), and 346 to 370 (ADDQ…SPKR). A compositionally biased stretch (basic and acidic residues) spans 96-109 (THSELNEPPYRDEV). The span at 216–236 (SSNPTSRPSTSSTLPSHPSGS) shows a compositional bias: low complexity. Composition is skewed to basic and acidic residues over residues 244-264 (SHPE…FRFP) and 349-360 (QETRDKDDHPRS).

The protein belongs to the MDM12 family. As to quaternary structure, component of the ER-mitochondria encounter structure (ERMES) or MDM complex, composed of mmm1, mdm10, mdm12 and mdm34. A mmm1 homodimer associates with one molecule of mdm12 on each side in a pairwise head-to-tail manner, and the SMP-LTD domains of mmm1 and mdm12 generate a continuous hydrophobic tunnel for phospholipid trafficking.

The protein localises to the mitochondrion outer membrane. It is found in the endoplasmic reticulum membrane. Component of the ERMES/MDM complex, which serves as a molecular tether to connect the endoplasmic reticulum (ER) and mitochondria. Components of this complex are involved in the control of mitochondrial shape and protein biogenesis, and function in nonvesicular lipid trafficking between the ER and mitochondria. Mdm12 is required for the interaction of the ER-resident membrane protein mmm1 and the outer mitochondrial membrane-resident beta-barrel protein mdm10. The mdm12-mmm1 subcomplex functions in the major beta-barrel assembly pathway that is responsible for biogenesis of all mitochondrial outer membrane beta-barrel proteins, and acts in a late step after the SAM complex. The mdm10-mdm12-mmm1 subcomplex further acts in the TOM40-specific pathway after the action of the mdm12-mmm1 complex. Essential for establishing and maintaining the structure of mitochondria and maintenance of mtDNA nucleoids. In Aspergillus terreus (strain NIH 2624 / FGSC A1156), this protein is Mitochondrial distribution and morphology protein 12.